The primary structure comprises 593 residues: Dihydroxy-acid dehydratase (593 aa).

The segment covering 1 to 17 has biased composition (acidic residues); that stretch reads MSQQTEPDDDAALDGDE. Residues 1–40 form a disordered region; sequence MSQQTEPDDDAALDGDEPGAYGKDERLRSREVTEGPERAP. The segment covering 22–40 has biased composition (basic and acidic residues); it reads GKDERLRSREVTEGPERAP. Cys-72 provides a ligand contact to [2Fe-2S] cluster. Asp-104 provides a ligand contact to Mg(2+). Cys-145 contacts [2Fe-2S] cluster. Residues Asp-146 and Lys-147 each coordinate Mg(2+). N6-carboxylysine is present on Lys-147. Cys-217 lines the [2Fe-2S] cluster pocket. Glu-475 provides a ligand contact to Mg(2+). Residue Ser-501 is the Proton acceptor of the active site.

Belongs to the IlvD/Edd family. In terms of assembly, homodimer. [2Fe-2S] cluster serves as cofactor. The cofactor is Mg(2+).

It carries out the reaction (2R)-2,3-dihydroxy-3-methylbutanoate = 3-methyl-2-oxobutanoate + H2O. It catalyses the reaction (2R,3R)-2,3-dihydroxy-3-methylpentanoate = (S)-3-methyl-2-oxopentanoate + H2O. It participates in amino-acid biosynthesis; L-isoleucine biosynthesis; L-isoleucine from 2-oxobutanoate: step 3/4. It functions in the pathway amino-acid biosynthesis; L-valine biosynthesis; L-valine from pyruvate: step 3/4. Functionally, functions in the biosynthesis of branched-chain amino acids. Catalyzes the dehydration of (2R,3R)-2,3-dihydroxy-3-methylpentanoate (2,3-dihydroxy-3-methylvalerate) into 2-oxo-3-methylpentanoate (2-oxo-3-methylvalerate) and of (2R)-2,3-dihydroxy-3-methylbutanoate (2,3-dihydroxyisovalerate) into 2-oxo-3-methylbutanoate (2-oxoisovalerate), the penultimate precursor to L-isoleucine and L-valine, respectively. This is Dihydroxy-acid dehydratase from Natronomonas pharaonis (strain ATCC 35678 / DSM 2160 / CIP 103997 / JCM 8858 / NBRC 14720 / NCIMB 2260 / Gabara) (Halobacterium pharaonis).